Reading from the N-terminus, the 339-residue chain is Anthranilate phosphoribosyltransferase (339 aa).

5-phospho-alpha-D-ribose 1-diphosphate is bound by residues G86, 89–90 (GD), T94, 96–99 (NIST), 114–122 (KHGNRGVSS), and S126. G86 contacts anthranilate. S98 contributes to the Mg(2+) binding site. N117 contacts anthranilate. R172 provides a ligand contact to anthranilate. Mg(2+) contacts are provided by D230 and E231.

This sequence belongs to the anthranilate phosphoribosyltransferase family. As to quaternary structure, homodimer. Requires Mg(2+) as cofactor.

The enzyme catalyses N-(5-phospho-beta-D-ribosyl)anthranilate + diphosphate = 5-phospho-alpha-D-ribose 1-diphosphate + anthranilate. The protein operates within amino-acid biosynthesis; L-tryptophan biosynthesis; L-tryptophan from chorismate: step 2/5. Its function is as follows. Catalyzes the transfer of the phosphoribosyl group of 5-phosphorylribose-1-pyrophosphate (PRPP) to anthranilate to yield N-(5'-phosphoribosyl)-anthranilate (PRA). This chain is Anthranilate phosphoribosyltransferase, found in Photobacterium profundum (strain SS9).